The chain runs to 906 residues: Aconitate hydratase A (906 aa).

Residues Cys443, Cys509, and Cys512 each coordinate [4Fe-4S] cluster.

The protein belongs to the aconitase/IPM isomerase family. As to quaternary structure, monomer. [4Fe-4S] cluster is required as a cofactor.

It carries out the reaction citrate = D-threo-isocitrate. The enzyme catalyses (2S,3R)-3-hydroxybutane-1,2,3-tricarboxylate = 2-methyl-cis-aconitate + H2O. It participates in carbohydrate metabolism; tricarboxylic acid cycle; isocitrate from oxaloacetate: step 2/2. It functions in the pathway organic acid metabolism; propanoate degradation. In terms of biological role, involved in the catabolism of short chain fatty acids (SCFA) via the tricarboxylic acid (TCA)(acetyl degradation route) and probably via the 2-methylcitrate cycle I (propionate degradation route). Catalyzes the reversible isomerization of citrate to isocitrate via cis-aconitate. Could catalyze the hydration of 2-methyl-cis-aconitate to yield (2R,3S)-2-methylisocitrate. The apo form of AcnA functions as a RNA-binding regulatory protein. The sequence is that of Aconitate hydratase A from Bradyrhizobium diazoefficiens (strain JCM 10833 / BCRC 13528 / IAM 13628 / NBRC 14792 / USDA 110).